The primary structure comprises 198 residues: FMN-dependent NADH:quinone oxidoreductase 2 (198 aa).

136 to 139 (SRGG) contacts FMN.

The protein belongs to the azoreductase type 1 family. In terms of assembly, homodimer. FMN serves as cofactor.

It carries out the reaction 2 a quinone + NADH + H(+) = 2 a 1,4-benzosemiquinone + NAD(+). The enzyme catalyses N,N-dimethyl-1,4-phenylenediamine + anthranilate + 2 NAD(+) = 2-(4-dimethylaminophenyl)diazenylbenzoate + 2 NADH + 2 H(+). Its function is as follows. Quinone reductase that provides resistance to thiol-specific stress caused by electrophilic quinones. In terms of biological role, also exhibits azoreductase activity. Catalyzes the reductive cleavage of the azo bond in aromatic azo compounds to the corresponding amines. The protein is FMN-dependent NADH:quinone oxidoreductase 2 of Clostridium perfringens (strain 13 / Type A).